The sequence spans 229 residues: Heptaprenylglyceryl phosphate synthase (229 aa).

Residue K12 participates in sn-glycerol 1-phosphate binding. Positions 14 and 40 each coordinate Mg(2+). Residues 159–164 (YLEYSG), G189, and 209–210 (GN) contribute to the sn-glycerol 1-phosphate site.

It belongs to the GGGP/HepGP synthase family. Group I subfamily. In terms of assembly, homodimer. The cofactor is Mg(2+).

The enzyme catalyses sn-glycerol 1-phosphate + all-trans-heptaprenyl diphosphate = 3-heptaprenyl-sn-glycero-1-phosphate + diphosphate. It functions in the pathway membrane lipid metabolism; glycerophospholipid metabolism. In terms of biological role, prenyltransferase that catalyzes in vivo the transfer of the heptaprenyl moiety of heptaprenyl pyrophosphate (HepPP; 35 carbon atoms) to the C3 hydroxyl of sn-glycerol-1-phosphate (G1P), producing heptaprenylglyceryl phosphate (HepGP). This reaction is an ether-bond-formation step in the biosynthesis of archaea-type G1P-based membrane lipids found in Bacillales. The polypeptide is Heptaprenylglyceryl phosphate synthase (Bacillus cytotoxicus (strain DSM 22905 / CIP 110041 / 391-98 / NVH 391-98)).